The sequence spans 536 residues: MAAPSPVRVKLLFDYPPPAIPESCMFWLLLDAKRCRVVTDLASIIRHKYMDGQGGGISLYVEDCLLPPGESILVIRDNDSIRVKWDGAAIERNQEAETCNDGAQNKSKKRHWKKSEDECDSGHKRKKQKSSSTQVDLKSGKDGGIRDKRKPSPPMECNASDPEELRESGRKTHKGKRTKKKSEAPIENPPDKHSRKCPPQASNKALKLSWKRQTSSSDSSDTSSCSDQPTPTTQQKPQSSAKRQNQAATRESVTHSVSPKAVNGISSTKNKKADAPISSSDMDTAVGGNETLICPVPPEDLSTHIQQHSQSPTSDSAESIELVIKKSNASLSSLTDNRVAGVSDKLSPNVSGRGRGRGEDFSWRGQRGRWFRGQGNNSNRGRGRGDSSNVFYKYNTEKEKQQQLEESATNVSIIIQNPQETMKRDYSSLPLLAAAPQVGKLIAFKLLEVSENYTPEVSEYKEGKILSFDPVTKQIEMEIISQQTMRKPGKFDVVYQSEDGEDIVEYAVPQESKVMLNWNTLIEPRLLMEKESQVQC.

Residues 96 to 316 (AETCNDGAQN…QHSQSPTSDS (221 aa)) form a disordered region. A compositionally biased stretch (basic residues) spans 171-180 (KTHKGKRTKK). Positions 181-192 (KSEAPIENPPDK) are enriched in basic and acidic residues. Positions 213–238 (QTSSSDSSDTSSCSDQPTPTTQQKPQ) are enriched in low complexity. 2 stretches are compositionally biased toward polar residues: residues 239–257 (SSAK…THSV) and 303–316 (THIQ…TSDS). 2 repeat units span residues 353-358 (RGRGRG) and 380-385 (RGRGRG). A 2 X 6 AA repeats of R-G-R-G-R-G region spans residues 353 to 385 (RGRGRGEDFSWRGQRGRWFRGQGNNSNRGRGRG). The disordered stretch occupies residues 368-387 (GRWFRGQGNNSNRGRGRGDS). Residues 371–380 (FRGQGNNSNR) show a composition bias toward low complexity. Residues 425-523 (DYSSLPLLAA…VMLNWNTLIE (99 aa)) enclose the Tudor; atypical domain.

The protein belongs to the coilin family. In terms of tissue distribution, expressed in both oocytes and somatic cells.

Its subcellular location is the nucleus. The chain is Coilin (coil) from Xenopus laevis (African clawed frog).